The chain runs to 471 residues: UDP-N-acetylmuramate--L-alanine ligase (471 aa).

ATP is bound at residue 112-118 (GTHGKTT).

This sequence belongs to the MurCDEF family.

It is found in the cytoplasm. It catalyses the reaction UDP-N-acetyl-alpha-D-muramate + L-alanine + ATP = UDP-N-acetyl-alpha-D-muramoyl-L-alanine + ADP + phosphate + H(+). It participates in cell wall biogenesis; peptidoglycan biosynthesis. Functionally, cell wall formation. The chain is UDP-N-acetylmuramate--L-alanine ligase from Cupriavidus metallidurans (strain ATCC 43123 / DSM 2839 / NBRC 102507 / CH34) (Ralstonia metallidurans).